The sequence spans 191 residues: Ribosome maturation factor RimM (191 aa).

The region spanning 102–185 (EEEYHVSQLI…RIEINPPKGL (84 aa)) is the PRC barrel domain.

It belongs to the RimM family. In terms of assembly, binds ribosomal protein uS19.

The protein resides in the cytoplasm. In terms of biological role, an accessory protein needed during the final step in the assembly of 30S ribosomal subunit, possibly for assembly of the head region. Essential for efficient processing of 16S rRNA. May be needed both before and after RbfA during the maturation of 16S rRNA. It has affinity for free ribosomal 30S subunits but not for 70S ribosomes. This is Ribosome maturation factor RimM from Crocosphaera subtropica (strain ATCC 51142 / BH68) (Cyanothece sp. (strain ATCC 51142)).